The chain runs to 259 residues: Hydroxyacylglutathione hydrolase (259 aa).

Zn(2+) is bound by residues histidine 56, histidine 58, aspartate 60, histidine 61, histidine 112, aspartate 133, and histidine 171.

The protein belongs to the metallo-beta-lactamase superfamily. Glyoxalase II family. As to quaternary structure, monomer. Zn(2+) is required as a cofactor.

The catalysed reaction is an S-(2-hydroxyacyl)glutathione + H2O = a 2-hydroxy carboxylate + glutathione + H(+). It functions in the pathway secondary metabolite metabolism; methylglyoxal degradation; (R)-lactate from methylglyoxal: step 2/2. In terms of biological role, thiolesterase that catalyzes the hydrolysis of S-D-lactoyl-glutathione to form glutathione and D-lactic acid. The chain is Hydroxyacylglutathione hydrolase from Pseudomonas putida (strain GB-1).